The primary structure comprises 347 residues: Haptoglobin (347 aa).

The first 18 residues, 1 to 18 (MRALGAVVTLLLWGQLFA), serve as a signal peptide directing secretion. A Sushi domain is found at 31–88 (DSCPKPPEIANGYVEHLVRYRCRQFYRLRTEGDGVYTLNDEKQWVNTAAGEKLPECEA). Intrachain disulfides connect C52/C86, C90/C207, C250/C281, and C292/C322. Positions 103–345 (IIGGSMDAKG…LKDWVQETMA (243 aa)) constitute a Peptidase S1 domain. N-linked (GlcNAc...) asparagine glycosylation is found at N148, N182, N256, and N264. The tract at residues 259–264 (VPEKKN) is interaction with CD163.

This sequence belongs to the peptidase S1 family. As to quaternary structure, tetramer of two alpha and two beta chains; disulfide-linked. The hemoglobin/haptoglobin complex is composed of a haptoglobin dimer bound to two hemoglobin alpha-beta dimers. Interacts with CD163. Interacts with ERGIC3. In terms of tissue distribution, expressed by the liver and secreted in plasma.

The protein localises to the secreted. Functionally, as a result of hemolysis, hemoglobin is found to accumulate in the kidney and is secreted in the urine. Haptoglobin captures, and combines with free plasma hemoglobin to allow hepatic recycling of heme iron and to prevent kidney damage. Haptoglobin also acts as an antioxidant, has antibacterial activity and plays a role in modulating many aspects of the acute phase response. Hemoglobin/haptoglobin complexes are rapidly cleared by the macrophage CD163 scavenger receptor expressed on the surface of liver Kupfer cells through an endocytic lysosomal degradation pathway. This Mus saxicola (Brown spiny mouse) protein is Haptoglobin (Hp).